The following is a 23-amino-acid chain: Testis ecdysiotropin peptide B (23 aa).

Its function is as follows. Stimulates synthesis of ecdysteroid in the testes of larvae and pupae. In Lymantria dispar (Gypsy moth), this protein is Testis ecdysiotropin peptide B.